We begin with the raw amino-acid sequence, 445 residues long: Trigger factor (445 aa).

Positions 166–251 constitute a PPIase FKBP-type domain; the sequence is GDVVVVDFVG…AKALKRPVDV (86 aa).

It belongs to the FKBP-type PPIase family. Tig subfamily.

The protein localises to the cytoplasm. The enzyme catalyses [protein]-peptidylproline (omega=180) = [protein]-peptidylproline (omega=0). Functionally, involved in protein export. Acts as a chaperone by maintaining the newly synthesized protein in an open conformation. Functions as a peptidyl-prolyl cis-trans isomerase. This chain is Trigger factor, found in Gluconacetobacter diazotrophicus (strain ATCC 49037 / DSM 5601 / CCUG 37298 / CIP 103539 / LMG 7603 / PAl5).